The sequence spans 84 residues: Xenoxin-1 (84 aa).

A signal peptide spans 1-18 (MRYAIVFFLVCVITLGEA). 4 disulfides stabilise this stretch: Cys21-Cys42, Cys35-Cys55, Cys61-Cys76, and Cys77-Cys82.

Expressed by the skin dorsal glands.

The protein resides in the secreted. Its function is as follows. Lacks alpha-neurotoxic activity, has apparently no antibacterial activity, nor anti-coagulant potency. In Xenopus laevis (African clawed frog), this protein is Xenoxin-1 (xenoxin-1).